A 733-amino-acid chain; its full sequence is 2'-5'-oligoadenylate synthase 2 (733 aa).

The N-myristoyl glycine moiety is linked to residue G2. OAS domain regions lie at residues 47-365 (VPSQ…CWDV) and 373-713 (TPSH…WKVP). An N6-acetyllysine modification is found at K408. An ATP-binding site is contributed by S427. 3 residues coordinate Mg(2+): D439, D441, and D510. ATP is bound by residues R574 and K577.

The protein belongs to the 2-5A synthase family. In terms of assembly, homodimer. It depends on Mg(2+) as a cofactor. Post-translationally, myristoylation is not essential for its activity. In terms of processing, glycosylated. Glycosylation is essential for its activity.

The protein resides in the cytoplasm. It localises to the perinuclear region. It catalyses the reaction 3 ATP = 5'-triphosphoadenylyl-(2'-&gt;5')-adenylyl-(2'-&gt;5')-adenosine + 2 diphosphate. Produced as a latent enzyme which is activated by double stranded RNA (dsRNA) generated during the course of viral infection. The dsRNA activator must be at least 15 nucleotides long, and no modification of the 2'-hydroxyl group is tolerated. ssRNA or dsDNA do not act as activators. Strongly inhibited by copper, iron and zinc ions. Partially inhibited by cobalt and nickel ions. Functionally, interferon-induced, dsRNA-activated antiviral enzyme which plays a critical role in cellular innate antiviral response. Activated by detection of double stranded RNA (dsRNA): polymerizes higher oligomers of 2'-5'-oligoadenylates (2-5A) from ATP which then bind to the inactive monomeric form of ribonuclease L (RNASEL) leading to its dimerization and subsequent activation. Activation of RNASEL leads to degradation of cellular as well as viral RNA, resulting in the inhibition of protein synthesis, thus terminating viral replication. Can mediate the antiviral effect via the classical RNASEL-dependent pathway or an alternative antiviral pathway independent of RNASEL. In addition, it may also play a role in other cellular processes such as apoptosis, cell growth, differentiation and gene regulation. May act as a negative regulator of lactation, stopping lactation in virally infected mammary gland lobules, thereby preventing transmission of viruses to neonates. Non-infected lobules would not be affected, allowing efficient pup feeding during infection. The chain is 2'-5'-oligoadenylate synthase 2 (Oas2) from Rattus norvegicus (Rat).